Reading from the N-terminus, the 381-residue chain is N-acetyldiaminopimelate deacetylase (381 aa).

Residue aspartate 73 is part of the active site. Glutamate 132 serves as the catalytic Proton acceptor.

Belongs to the peptidase M20A family. N-acetyldiaminopimelate deacetylase subfamily.

It carries out the reaction N-acetyl-(2S,6S)-2,6-diaminopimelate + H2O = (2S,6S)-2,6-diaminopimelate + acetate. It functions in the pathway amino-acid biosynthesis; L-lysine biosynthesis via DAP pathway; LL-2,6-diaminopimelate from (S)-tetrahydrodipicolinate (acetylase route): step 3/3. In terms of biological role, catalyzes the conversion of N-acetyl-diaminopimelate to diaminopimelate and acetate. The sequence is that of N-acetyldiaminopimelate deacetylase from Limosilactobacillus reuteri (strain DSM 20016) (Lactobacillus reuteri).